The following is a 251-amino-acid chain: CDP-diacylglycerol pyrophosphatase (251 aa).

The chain crosses the membrane as a helical span at residues 4–24 (AGLLFLVMIVIAVVAAGIGYW).

It belongs to the Cdh family.

It is found in the cell inner membrane. It catalyses the reaction a CDP-1,2-diacyl-sn-glycerol + H2O = a 1,2-diacyl-sn-glycero-3-phosphate + CMP + 2 H(+). It functions in the pathway phospholipid metabolism; CDP-diacylglycerol degradation; phosphatidate from CDP-diacylglycerol: step 1/1. The chain is CDP-diacylglycerol pyrophosphatase from Escherichia coli O7:K1 (strain IAI39 / ExPEC).